Reading from the N-terminus, the 1122-residue chain is Phytochrome A (1122 aa).

Residues 1 to 11 (MSGSRPTQSSE) show a composition bias toward polar residues. The tract at residues 1–21 (MSGSRPTQSSEGSRRSRHSAR) is disordered. Residues 218-402 (SMERLCDTMV…VFAIHVNKEV (185 aa)) enclose the GAF domain. C323 provides a ligand contact to phytochromobilin. The PAS 1 domain occupies 618 to 688 (VTSEMVRLIE…RMLENALEGT (71 aa)). In terms of domain architecture, PAC spans 695–747 (FEIKTHLSRADAGPISLVVNACASRDLHENVVGVCFVAHDLTGQKTVMDKFTR). The PAS 2 domain occupies 748-822 (IEGDYKAIIQ…KNQEAFVNLG (75 aa)). The Histidine kinase domain occupies 902-1119 (YIKRQIRNPL…SFIITAELAA (218 aa)).

This sequence belongs to the phytochrome family. Homodimer. Interacts with NDPK2 and PKS4. Stabilized by interactions with PAPP5 and FYPP3 which are enhanced in the phosphorylated Pfr form. Interacts with COP1/SPA1 complex. Binds, via its photosensory domain, to PTAC12/HMR when photoactivated; this interaction stimulates its localization to photobodies. Interacts with FHY1, FHL and FHY3, especially upon far-red (FR) light illumination; when underphosphorylated. Forms PHYA/FHY1/HFR1 complex. Binds to PIF3/PAP3. Phosphorylated. In terms of processing, contains one covalently linked phytochromobilin chromophore. In terms of tissue distribution, expressed in fruits, flowers, leaves, stems, seedlings and roots.

The protein localises to the cytoplasm. It is found in the nucleus. It localises to the nucleoplasm. The protein resides in the nucleus speckle. In terms of biological role, regulatory photoreceptor which exists in two forms that are reversibly interconvertible by light: the Pr form that absorbs maximally in the red region of the spectrum and the Pfr form that absorbs maximally in the far-red region. Photoconversion of Pr to Pfr induces an array of morphogenetic responses, whereas reconversion of Pfr to Pr cancels the induction of those responses. Pfr controls the expression of a number of nuclear genes including those encoding the small subunit of ribulose-bisphosphate carboxylase, chlorophyll A/B binding protein, protochlorophyllide reductase, rRNA, etc. It also controls the expression of its own gene(s) in a negative feedback fashion. Involved in the flowering time regulation. Can phosphorylate FHY1 and, possibly, FHL, in red light conditions; this inactivates their co-shuttling to the nucleus. Regulates phototropic responses both in the nucleus (e.g. hypocotyl elongation and cotyledon opening under high-irradiance conditions and seed germination under very-low-fluence conditions) and in the cytoplasm (e.g. negative gravitropism in blue light and red-enhanced phototropism). Promotes seed germination, suppression of hypocotyl elongation, and randomization of hypocotyl growth orientation in far-red light; these responses to far-red light are repressed by UNE10/PIF8. Stabilizes UNE10/PIF8 but sequesters PIF3/PAP3 from its target genes promoters in far-red light. The chain is Phytochrome A from Arabidopsis thaliana (Mouse-ear cress).